We begin with the raw amino-acid sequence, 369 residues long: Deoxyhypusine synthase (369 aa).

Ser78 bears the Phosphoserine mark. Residues Ser105–Ser109, Thr131–Gly133, Glu137, and Asp238 each bind NAD(+). Glu136–Glu137 provides a ligand contact to spermidine. Residue Asp243 coordinates spermidine. Gly283 is a binding site for NAD(+). His288 contacts spermidine. Position 308–309 (Thr308–Ala309) interacts with NAD(+). Spermidine-binding positions include Gly314–Asp316 and Glu323–Lys329. Lys329 functions as the Nucleophile in the catalytic mechanism. Residue Asp342–Ala343 coordinates NAD(+).

The protein belongs to the deoxyhypusine synthase family. Homotetramer formed by a dimer of dimers. NAD(+) serves as cofactor.

It carries out the reaction [eIF5A protein]-L-lysine + spermidine = [eIF5A protein]-deoxyhypusine + propane-1,3-diamine. It functions in the pathway protein modification; eIF5A hypusination. In terms of biological role, catalyzes the NAD-dependent oxidative cleavage of spermidine and the subsequent transfer of the butylamine moiety of spermidine to the epsilon-amino group of a critical lysine residue of the eIF-5A precursor protein to form the intermediate deoxyhypusine residue. This is the first step of the post-translational modification of that lysine into an unusual amino acid residue named hypusine. Hypusination is unique to mature eIF-5A factor and is essential for its function. This chain is Deoxyhypusine synthase (DHPS), found in Homo sapiens (Human).